The primary structure comprises 228 residues: Eukaryotic translation initiation factor 4E-2 (228 aa).

Residues cysteine 130 and cysteine 134 are joined by a disulfide bond.

Belongs to the eukaryotic initiation factor 4E family. In terms of assembly, eIF4F is a multi-subunit complex, the composition of which varies with external and internal environmental conditions. It is composed of at least eIF4A, eIF4E and eIF4G. eIF4E is also known to interact with other partners. Highly expressed in all somatic tissues.

Its function is as follows. Recognizes and binds the 7-methylguanosine-containing mRNA cap during an early step in the initiation of protein synthesis and facilitates ribosome binding by inducing the unwinding of the mRNAs secondary structures. All 5 eIF4E proteins bind monomethyl cap structures. Only ife-1, ife-2 and ife-5 bind trimethyl cap structures which result from trans-splicing. Translation of trimethyl cap structure mRNAs may be regulated by intracellular redox state; disulfide bonds change the width and depth of the cap-binding cavity determining selectivity to mRNA caps. Probably by regulating mRNA translation in somatic cells, negatively regulates lifespan independently of daf-2/insulin and let-363/TOR pathways. Negatively regulates resistance to oxidative stress. May play a role in embryonic development. This chain is Eukaryotic translation initiation factor 4E-2 (ife-2), found in Caenorhabditis elegans.